A 243-amino-acid polypeptide reads, in one-letter code: 1-(5-phosphoribosyl)-5-[(5-phosphoribosylamino)methylideneamino] imidazole-4-carboxamide isomerase (243 aa).

The Proton acceptor role is filled by D8. D129 (proton donor) is an active-site residue.

Belongs to the HisA/HisF family.

The protein localises to the cytoplasm. The catalysed reaction is 1-(5-phospho-beta-D-ribosyl)-5-[(5-phospho-beta-D-ribosylamino)methylideneamino]imidazole-4-carboxamide = 5-[(5-phospho-1-deoxy-D-ribulos-1-ylimino)methylamino]-1-(5-phospho-beta-D-ribosyl)imidazole-4-carboxamide. The protein operates within amino-acid biosynthesis; L-histidine biosynthesis; L-histidine from 5-phospho-alpha-D-ribose 1-diphosphate: step 4/9. The chain is 1-(5-phosphoribosyl)-5-[(5-phosphoribosylamino)methylideneamino] imidazole-4-carboxamide isomerase from Syntrophotalea carbinolica (strain DSM 2380 / NBRC 103641 / GraBd1) (Pelobacter carbinolicus).